Reading from the N-terminus, the 190-residue chain is Elongation factor P-like protein (190 aa).

It belongs to the elongation factor P family.

The chain is Elongation factor P-like protein from Photorhabdus laumondii subsp. laumondii (strain DSM 15139 / CIP 105565 / TT01) (Photorhabdus luminescens subsp. laumondii).